Reading from the N-terminus, the 139-residue chain is uncharacterized protein (139 aa).

Positions 8 to 139 constitute an HTH marR-type domain; that stretch reads ANLLDHALTK…FLAIIAKLAQ (132 aa). The segment at residues 53 to 76 is a DNA-binding region (H-T-H motif); it reads IKDILKEVTLSPSATTTALNHLEQ.

This is an uncharacterized protein from Bacillus subtilis (strain 168).